The primary structure comprises 497 residues: Glycerol kinase 2 (497 aa).

Residue Thr-13 participates in ADP binding. Residues Thr-13, Thr-14, and Ser-15 each contribute to the ATP site. Thr-13 provides a ligand contact to sn-glycerol 3-phosphate. Arg-17 provides a ligand contact to ADP. Residues Arg-83, Glu-84, Tyr-134, and Asp-241 each contribute to the sn-glycerol 3-phosphate site. Arg-83, Glu-84, Tyr-134, Asp-241, and Gln-242 together coordinate glycerol. ADP is bound by residues Thr-263 and Gly-305. 4 residues coordinate ATP: Thr-263, Gly-305, Gln-309, and Gly-406. Gly-406 and Asn-410 together coordinate ADP.

It belongs to the FGGY kinase family.

It carries out the reaction glycerol + ATP = sn-glycerol 3-phosphate + ADP + H(+). The protein operates within polyol metabolism; glycerol degradation via glycerol kinase pathway; sn-glycerol 3-phosphate from glycerol: step 1/1. In terms of biological role, key enzyme in the regulation of glycerol uptake and metabolism. Catalyzes the phosphorylation of glycerol to yield sn-glycerol 3-phosphate. The chain is Glycerol kinase 2 from Sulfolobus acidocaldarius (strain ATCC 33909 / DSM 639 / JCM 8929 / NBRC 15157 / NCIMB 11770).